Consider the following 757-residue polypeptide: Maltose phosphorylase (757 aa).

354–355 (WD) serves as a coordination point for substrate. Catalysis depends on glutamate 483, which acts as the Proton donor. Residue 588-589 (KQ) coordinates substrate.

This sequence belongs to the glycosyl hydrolase 65 family.

It catalyses the reaction D-maltose + phosphate = beta-D-glucose 1-phosphate + D-glucose. Its pathway is glycan degradation; maltose degradation. Catalyzes the phosphorolysis of maltose, leading to the formation of glucose and glucose 1-P. The sequence is that of Maltose phosphorylase (mdxK) from Bacillus subtilis (strain 168).